The chain runs to 543 residues: Cytochrome P450 307a1 (543 aa).

S219 carries the phosphoserine modification. Positions 440–460 are disordered; that stretch reads FLEPSKEQSPKNSKGSDSGIE. A compositionally biased stretch (polar residues) spans 449-460; sequence PKNSKGSDSGIE. Heme is bound at residue C485.

Belongs to the cytochrome P450 family. Requires heme as cofactor.

The protein localises to the endoplasmic reticulum membrane. The protein resides in the microsome membrane. Its function is as follows. Required for correct development of the embryonic midline glial cells which are necessary for the formation of distinct segmental commissures. The sequence is that of Cytochrome P450 307a1 (spo) from Drosophila melanogaster (Fruit fly).